A 207-amino-acid polypeptide reads, in one-letter code: Dephospho-CoA kinase (207 aa).

Positions Val-4–Phe-204 constitute a DPCK domain. Gly-12 to Thr-17 serves as a coordination point for ATP.

It belongs to the CoaE family.

Its subcellular location is the cytoplasm. The enzyme catalyses 3'-dephospho-CoA + ATP = ADP + CoA + H(+). It functions in the pathway cofactor biosynthesis; coenzyme A biosynthesis; CoA from (R)-pantothenate: step 5/5. Its function is as follows. Catalyzes the phosphorylation of the 3'-hydroxyl group of dephosphocoenzyme A to form coenzyme A. The polypeptide is Dephospho-CoA kinase (Aggregatibacter actinomycetemcomitans (Actinobacillus actinomycetemcomitans)).